Consider the following 110-residue polypeptide: UPF0251 protein PYRAB12660 (110 aa).

The protein belongs to the UPF0251 family.

In Pyrococcus abyssi (strain GE5 / Orsay), this protein is UPF0251 protein PYRAB12660.